A 306-amino-acid chain; its full sequence is UDP-3-O-acyl-N-acetylglucosamine deacetylase (306 aa).

Zn(2+) contacts are provided by His-79, His-238, and Asp-242. His-265 functions as the Proton donor in the catalytic mechanism.

Belongs to the LpxC family. Zn(2+) serves as cofactor.

It carries out the reaction a UDP-3-O-[(3R)-3-hydroxyacyl]-N-acetyl-alpha-D-glucosamine + H2O = a UDP-3-O-[(3R)-3-hydroxyacyl]-alpha-D-glucosamine + acetate. It participates in glycolipid biosynthesis; lipid IV(A) biosynthesis; lipid IV(A) from (3R)-3-hydroxytetradecanoyl-[acyl-carrier-protein] and UDP-N-acetyl-alpha-D-glucosamine: step 2/6. Catalyzes the hydrolysis of UDP-3-O-myristoyl-N-acetylglucosamine to form UDP-3-O-myristoylglucosamine and acetate, the committed step in lipid A biosynthesis. The chain is UDP-3-O-acyl-N-acetylglucosamine deacetylase from Shewanella sp. (strain W3-18-1).